The chain runs to 431 residues: MKVLVTAFAMDAHFNGVVPLAWALRAAGHDVRVASQPALTDSITRAGLTAVPVGTDHQVQAAMGAMAPGVFALHLNPDYLENRPELLDLEFLEASTSMLTAAFYAQINNDSMIDEMVDFAAWWRPDLVVWEPFTFGGAVAAQVTGAAQARLLWGPDLFLRVHDRFQQVLHEVPAERRDDALEEWLTWTLERHGAAFGPEVISGHWTIDQMPPSVRFATARPTVPMRFVPYNGPVPAVVPPWLRADPGRPRVLLTQGITERSTGFTGLPRAGELLASIAELDAEVVATVKAEEREGLPPLPGNVRVVDSLSLHVVLPSCAAVVHHGGAGTWATAALHGVPQLALAWQWDDVFRAGQLEKLGAGIFLPPHGEGASAGRVRDRLAQVLAEPSFRQGAARIRAEMLRTPAPGAVVPTLEQLTARHRAPAGQGVRH.

The signal sequence occupies residues 1–23 (MKVLVTAFAMDAHFNGVVPLAWA).

This sequence belongs to the glycosyltransferase 28 family.

The catalysed reaction is dTDP-beta-L-daunosamine + epsilon-rhodomycinone = rhodomycin D + dTDP + H(+). The protein operates within antibiotic biosynthesis; daunorubicin biosynthesis. It participates in antibiotic biosynthesis; carminomycin biosynthesis. In terms of biological role, involved in the biosynthesis of the anthracyclines carminomycin and daunorubicin (daunomycin) which are aromatic polyketide antibiotics that exhibit high cytotoxicity and are widely applied in the chemotherapy of a variety of cancers. Catalyzes the addition of the TDP activated glycoside, L-daunosamine-TDP (2,3,6-trideoxy-3-aminohexose-TDP) at position C-7 of epsilon-rhodomycinone to yield rhodomycin D. Glycosylation is a prerequisite for biological activity of anthracyclines and requires DnrQ which seems to act as an activator. The sequence is that of TDP-daunosamine transferase DnrS (dnrS) from Streptomyces peucetius.